The sequence spans 142 residues: 5a,11a-dehydrotetracycline/5a,11a-dehydrooxytetracycline reductase (142 aa).

This sequence belongs to the pyridoxamine 5'-phosphate oxidase family.

It carries out the reaction tetracycline + oxidized coenzyme F420-(gamma-L-Glu)(n) + H(+) = 5a,11a-dehydrotetracycline + reduced coenzyme F420-(gamma-L-Glu)(n). The enzyme catalyses oxytetracycline + oxidized coenzyme F420-(gamma-L-Glu)(n) + H(+) = 5a,11a-dehydrooxytetracycline + reduced coenzyme F420-(gamma-L-Glu)(n). The protein operates within antibiotic biosynthesis; oxytetracycline biosynthesis. Involved in the biosynthesis of the antibiotics tetracycline and oxytetracycline. Catalyzes the C(5) reduction of 5a,11a-dehydrooxytetracycline to yield oxytetracycline as a major product. Also catalyzes the C(12) reduction of 5a,11a-dehydrotetracycline (12-dehydrotetracycline) to produce tetracycline as a minor product. This is 5a,11a-dehydrotetracycline/5a,11a-dehydrooxytetracycline reductase from Streptomyces rimosus subsp. rimosus (strain ATCC 10970 / DSM 40260 / JCM 4667 / NRRL 2234).